We begin with the raw amino-acid sequence, 77 residues long: Small ribosomal subunit protein bS18 (77 aa).

The protein belongs to the bacterial ribosomal protein bS18 family. As to quaternary structure, part of the 30S ribosomal subunit. Forms a tight heterodimer with protein bS6.

Functionally, binds as a heterodimer with protein bS6 to the central domain of the 16S rRNA, where it helps stabilize the platform of the 30S subunit. In Lactobacillus helveticus (strain DPC 4571), this protein is Small ribosomal subunit protein bS18.